The chain runs to 724 residues: MRFFVSCAKGLEYLLVDEVLALGAAGATATVAGVNVEGGLCDAQRLVLWSRLASRVLWPLAAFACADEDALYAGVAALPWVEHVLPGQTLAVDAHVSGEAITHARYAAQRVKDAVVDTLRDAGVVRPSVDVEHPDVRLNLSLRKGRATLSVDLGGRALHHRGWRQAPHAASLKEHLAAAVLLRAGWAKVYAEGGGLLDPMCGSGTLLIEGALMVADVAPGLSRYADPDAMSHVSVAERPVLLPSRWRGFDVVAWEALVVDAQQRARRGLAELRPVLHGSDIDPRALGAASANARAAGVQDAIEFVVAGIDVLPAVSEPHGVVVCNAPYDVRLAADPGLYRHLGDALRRVVPRWRAALVCGSNTLAFATGLRAGKRYQFFNGALECVLIVCDPVVPLAREAGGAQALSEGAQMAANRLRKNVQRLKKWRIRAGVECYRVYDADLPEYAAAIDVYQEVDGARRLFLHVQEYAAPTSIPEGDVRRRRHELLAAVRAVFDVSVAQVALKTRQRGKGGSQYGCFAQRGEFFHVCEHGALLRVNLFDYLDTGLFLDHRPLRGRMAREAVGKRFLNVFCYTGVASVEAAVAGAAATTSVDLSSTYLHWCTDNFALNGQGGVRHRLVQADALAWLEAERGQYDVIFCDPPTFSNSARADDFDVQRDHVRLLRAAVARLTPGGVLYFSNNFRRFRLDVDAVAAFAQCEEISSVTIDLDFSRNTRIHRTWLLWR.

Positions 42–153 (DAQRLVLWSR…KGRATLSVDL (112 aa)) constitute a THUMP domain.

Belongs to the methyltransferase superfamily. RlmKL family.

It localises to the cytoplasm. The catalysed reaction is guanosine(2445) in 23S rRNA + S-adenosyl-L-methionine = N(2)-methylguanosine(2445) in 23S rRNA + S-adenosyl-L-homocysteine + H(+). It carries out the reaction guanosine(2069) in 23S rRNA + S-adenosyl-L-methionine = N(2)-methylguanosine(2069) in 23S rRNA + S-adenosyl-L-homocysteine + H(+). Specifically methylates the guanine in position 2445 (m2G2445) and the guanine in position 2069 (m7G2069) of 23S rRNA. The protein is Ribosomal RNA large subunit methyltransferase K/L of Xylella fastidiosa (strain M12).